The chain runs to 158 residues: C-type lectin BML-2 (158 aa).

The N-terminal stretch at 1–23 (MGHFTFTGLCLLAMFLSLRGAEC) is a signal peptide. 4 disulfides stabilise this stretch: Cys26-Cys37, Cys54-Cys154, Cys61-Cys156, and Cys129-Cys146. Residues 33-155 (KNGLCYKVFS…CESLHPFLCQ (123 aa)) enclose the C-type lectin domain. The Mannose-binding signature appears at 119-121 (EPN). Residue Asn121 is glycosylated (N-linked (GlcNAc...) asparagine). 3 residues coordinate Ca(2+): Glu127, Asn142, and Asp143.

The protein belongs to the true venom lectin family. As to quaternary structure, dimer. Probably non-covalently linked. Expressed by the venom gland.

The protein localises to the secreted. Its function is as follows. Recombinant C-type lectin BML-2 is able to agglutinate erythrocytes. May be a calcium-dependent lectin. In Bungarus multicinctus (Many-banded krait), this protein is C-type lectin BML-2.